We begin with the raw amino-acid sequence, 348 residues long: Phosphate acyltransferase (348 aa).

It belongs to the PlsX family. As to quaternary structure, homodimer. Probably interacts with PlsY.

It localises to the cytoplasm. It catalyses the reaction a fatty acyl-[ACP] + phosphate = an acyl phosphate + holo-[ACP]. The protein operates within lipid metabolism; phospholipid metabolism. Catalyzes the reversible formation of acyl-phosphate (acyl-PO(4)) from acyl-[acyl-carrier-protein] (acyl-ACP). This enzyme utilizes acyl-ACP as fatty acyl donor, but not acyl-CoA. The protein is Phosphate acyltransferase of Pectobacterium carotovorum subsp. carotovorum (strain PC1).